The primary structure comprises 551 residues: Arginine--tRNA ligase (551 aa).

The short motif at 125–135 is the 'HIGH' region element; that stretch reads ANPTGPLHIGH.

This sequence belongs to the class-I aminoacyl-tRNA synthetase family. Monomer.

It is found in the cytoplasm. It carries out the reaction tRNA(Arg) + L-arginine + ATP = L-arginyl-tRNA(Arg) + AMP + diphosphate. The polypeptide is Arginine--tRNA ligase (Nitratidesulfovibrio vulgaris (strain DSM 19637 / Miyazaki F) (Desulfovibrio vulgaris)).